The primary structure comprises 485 residues: Regulatory protein ViaA (485 aa).

The protein belongs to the ViaA family. In terms of assembly, homodimer. Interacts with RavA.

It is found in the cytoplasm. Component of the RavA-ViaA chaperone complex, which may act on the membrane to optimize the function of some of the respiratory chains. ViaA stimulates the ATPase activity of RavA. This Proteus mirabilis (strain HI4320) protein is Regulatory protein ViaA.